Reading from the N-terminus, the 210-residue chain is Somatotropin (210 aa).

Residues 1–22 form the signal peptide; that stretch reads MGQVFLLMPVLLVSCFLSQGAA. H38 is a Zn(2+) binding site. C71 and C183 form a disulfide bridge. A Zn(2+)-binding site is contributed by E192. Cysteines 200 and 208 form a disulfide.

It belongs to the somatotropin/prolactin family.

The protein resides in the secreted. Functionally, growth hormone plays an important role in growth control and is involved in the regulation of several anabolic processes. Implicated as an osmoregulatory substance important for seawater adaptation. The polypeptide is Somatotropin (gh) (Salmo salar (Atlantic salmon)).